The chain runs to 427 residues: DNA topoisomerase 6 subunit A (427 aa).

One can recognise a Topo IIA-type catalytic domain in the interval Leu-76–Val-209. Catalysis depends on Tyr-170, which acts as the O-(5'-phospho-DNA)-tyrosine intermediate. 2 residues coordinate Mg(2+): Glu-256 and Asp-308.

This sequence belongs to the TOP6A family. As to quaternary structure, homodimer. Heterotetramer of two TOP6A and two TOP6B subunits. Interacts with BIN4 and RHL1. Mg(2+) serves as cofactor. In terms of tissue distribution, highly expressed in leaves, stems, flowers and seedlings.

Its subcellular location is the nucleus. It catalyses the reaction ATP-dependent breakage, passage and rejoining of double-stranded DNA.. In terms of biological role, component of the DNA topoisomerase VI involved in chromatin organization and progression of endoreduplication cycles. Relaxes both positive and negative superturns and exhibits a strong decatenase activity. Involved in cell-elongation processes. This chain is DNA topoisomerase 6 subunit A, found in Arabidopsis thaliana (Mouse-ear cress).